A 145-amino-acid chain; its full sequence is Small ribosomal subunit protein eS19 (145 aa).

Belongs to the eukaryotic ribosomal protein eS19 family. In terms of assembly, component of the small ribosomal subunit.

It localises to the cytoplasm. The protein localises to the nucleus. Its function is as follows. Component of the small ribosomal subunit. The ribosome is a large ribonucleoprotein complex responsible for the synthesis of proteins in the cell. Required for pre-rRNA processing and maturation of 40S ribosomal subunits. The sequence is that of Small ribosomal subunit protein eS19 (rps19) from Myxine glutinosa (Atlantic hagfish).